An 896-amino-acid chain; its full sequence is Cytokine receptor common subunit beta (896 aa).

The N-terminal stretch at 1–22 (MDQQMALTWGLCYMALVALCWG) is a signal peptide. Residues 23 to 441 (HGVTEAEETV…SEEYTWKTDW (419 aa)) are Extracellular-facing. The cysteines at positions 39 and 49 are disulfide-linked. N62 carries N-linked (GlcNAc...) asparagine glycosylation. Intrachain disulfides connect C77-C99 and C88-C94. A Fibronectin type-III 1 domain is found at 136–243 (PPLPKNVSIS…PEVHWDSQPG (108 aa)). N141 is a glycosylation site (N-linked (GlcNAc...) asparagine). Residues 220–233 (SPGSSLSGRPSRWS) show a composition bias toward low complexity. The disordered stretch occupies residues 220-243 (SPGSSLSGRPSRWSPEVHWDSQPG). Disulfide bonds link C253-C263 and C292-C310. One can recognise a Fibronectin type-III 2 domain in the interval 343 to 439 (QMEPPTLNLT…KWSEEYTWKT (97 aa)). N350 carries an N-linked (GlcNAc...) asparagine glycan. The WSXWS motif motif lies at 428 to 432 (WSKWS). The helical transmembrane segment at 442–463 (VMPTLWIVLILVFLILTLLLIL) threads the bilayer. The Cytoplasmic segment spans residues 464–896 (RFGCVSVYRT…WDNSQSGKVC (433 aa)). The short motif at 477–485 (WKEKIPNPS) is the Box 1 motif element. Disordered stretches follow at residues 543–620 (EDPN…GGSL) and 658–725 (CGSS…TGPL). Composition is skewed to polar residues over residues 555-571 (PDTT…QLPN) and 658-668 (CGSSLETSGSP). A compositionally biased stretch (low complexity) spans 716–725 (PVLTLPTGPL). Phosphoserine is present on residues S752 and S754. A Phosphotyrosine modification is found at Y765. Residues 771 to 810 (SVSQAAKSPPGHPAPPVASSPTVIPGEPREEVGPASPHPE) are disordered.

This sequence belongs to the type I cytokine receptor family. Type 4 subfamily. Heterodimer of an alpha and a beta subunit. The beta subunit is common to the IL3, IL5 and GM-CSF receptors. The signaling GM-CSF receptor complex is a dodecamer of two head-to-head hexamers of two alpha, two beta, and two ligand subunits. Interacts with TMEM102; this interaction occurs preferentially in the absence of CSF2. Interacts with FCER1G; this interaction is direct. Interacts with LYN. In terms of processing, may be phosphorylated by LYN.

The protein localises to the membrane. In terms of biological role, high affinity receptor for interleukin-3, interleukin-5 and granulocyte-macrophage colony-stimulating factor. This Mus musculus (Mouse) protein is Cytokine receptor common subunit beta (Csf2rb).